The following is a 253-amino-acid chain: HTH-type transcriptional regulator YdeO (253 aa).

The HTH araC/xylS-type domain maps to 137–233; the sequence is GKVRNIVNMK…GNSPKRVSKE (97 aa). 2 DNA-binding regions (H-T-H motif) span residues 154-175 and 200-223; these read KDIC…KQEQ and VNKI…RKHF.

Its function is as follows. Induces the expression of gadE and mdtEF. Could also regulate the expression of other genes involved in acid resistance. This Escherichia coli O6:H1 (strain CFT073 / ATCC 700928 / UPEC) protein is HTH-type transcriptional regulator YdeO (ydeO).